Here is a 209-residue protein sequence, read N- to C-terminus: Probable septum site-determining protein MinC (209 aa).

It belongs to the MinC family. In terms of assembly, interacts with MinD and FtsZ.

Its function is as follows. Cell division inhibitor that blocks the formation of polar Z ring septums. Rapidly oscillates between the poles of the cell to destabilize FtsZ filaments that have formed before they mature into polar Z rings. Prevents FtsZ polymerization. This chain is Probable septum site-determining protein MinC, found in Clostridium kluyveri (strain NBRC 12016).